The primary structure comprises 726 residues: Probable cyclic nucleotide-gated ion channel 14 (726 aa).

Residues 1 to 86 (MEFKRDNTVR…GDAVLQWNRV (86 aa)) lie on the Cytoplasmic side of the membrane. Residues 87–107 (FLFWCLVALYVDPLFFFLSSV) form a helical membrane-spanning segment. Over 108–122 (KRIGRSSCMTTDLKL) the chain is Extracellular. The helical transmembrane segment at 123–143 (GIVITFFRTLADLFYVLHIVI) threads the bilayer. Over 144–177 (KFRTAYVSRTSRVFGRGELVKDPKLIARRYLRSD) the chain is Cytoplasmic. The helical transmembrane segment at 178 to 198 (FIVDLIACLPLPQIVSWFILP) threads the bilayer. The Extracellular portion of the chain corresponds to 199-211 (SIRSSHSDHTTNA). Residues 212–232 (LVLIVLVQYIPRLYLIFPLSA) form a helical membrane-spanning segment. Topologically, residues 233-252 (EIIKATGVVTTTAWAGAAYN) are cytoplasmic. A helical transmembrane segment spans residues 253 to 273 (LLQYMLASHILGSAWYLLSIE). Residues 274-377 (RQATCWKAEC…LSTSTSVLET (104 aa)) lie on the Extracellular side of the membrane. A helical transmembrane segment spans residues 378 to 398 (MFAILVAIFGLVLFALLIGNM). Topologically, residues 399 to 726 (QTYLQSITVR…PDEPDFSVDD (328 aa)) are cytoplasmic. A nucleoside 3',5'-cyclic phosphate-binding positions include 481-605 (LFAQ…SKKL) and glutamate 552. Positions 597 to 612 (FRRLHSKKLQHTFRYY) are calmodulin-binding. An IQ domain is found at 617 to 646 (RTWAACFVQVAWRRYKRKKLAKSLSLAESF). A disordered region spans residues 707–726 (KDVEIPMLPKPDEPDFSVDD).

This sequence belongs to the cyclic nucleotide-gated cation channel (TC 1.A.1.5) family. Homotetramer or heterotetramer.

The protein resides in the cell membrane. Functionally, probable cyclic nucleotide-gated ion channel. This Arabidopsis thaliana (Mouse-ear cress) protein is Probable cyclic nucleotide-gated ion channel 14 (CNGC14).